We begin with the raw amino-acid sequence, 123 residues long: Small ribosomal subunit protein uS12c (123 aa).

The protein belongs to the universal ribosomal protein uS12 family. As to quaternary structure, part of the 30S ribosomal subunit.

It localises to the plastid. Its subcellular location is the chloroplast. In terms of biological role, with S4 and S5 plays an important role in translational accuracy. Located at the interface of the 30S and 50S subunits. The polypeptide is Small ribosomal subunit protein uS12c (rps12) (Chara vulgaris (Common stonewort)).